Consider the following 336-residue polypeptide: tRNA N6-adenosine threonylcarbamoyltransferase (336 aa).

The Fe cation site is built by histidine 114 and histidine 118. Substrate-binding positions include 136–140 (LVSGG), aspartate 169, glycine 182, aspartate 186, and asparagine 275. Residue aspartate 301 participates in Fe cation binding.

The protein belongs to the KAE1 / TsaD family. It depends on Fe(2+) as a cofactor.

It is found in the cytoplasm. The catalysed reaction is L-threonylcarbamoyladenylate + adenosine(37) in tRNA = N(6)-L-threonylcarbamoyladenosine(37) in tRNA + AMP + H(+). Its function is as follows. Required for the formation of a threonylcarbamoyl group on adenosine at position 37 (t(6)A37) in tRNAs that read codons beginning with adenine. Is involved in the transfer of the threonylcarbamoyl moiety of threonylcarbamoyl-AMP (TC-AMP) to the N6 group of A37, together with TsaE and TsaB. TsaD likely plays a direct catalytic role in this reaction. In Streptococcus pneumoniae serotype 19F (strain G54), this protein is tRNA N6-adenosine threonylcarbamoyltransferase.